A 467-amino-acid chain; its full sequence is Protection of telomeres protein 1a (467 aa).

Belongs to the telombin family. In terms of assembly, component of the telomerase holoenzyme complex at least composed of TERT, CBF5 and POT1a. The RNA molecule associated to the telomerase complex, and providing a template for telomeric DNA synthesis, is most likely TR and not TER1 as described previously. Interacts with the N-terminal part of TERT. Interacts with CBF5. Interacts with CTC1 and STN1. Does not interact with TEN1. Expressed in roots, rosette leaves, cauline leaves, stems and flowers.

The protein localises to the nucleus. Its subcellular location is the chromosome. It is found in the telomere. It localises to the nucleolus. The protein resides in the cytoplasm. Functionally, component of the telomerase ribonucleoprotein (RNP) complex that is essential for the positive regulation of telomere length. Binds RNA non-specifically. Binds specifically single-stranded telomeric DNA. Not required to recruit telomerase to telomeres, but stimulates TER1 RNP repeat addition processivity. The protein is Protection of telomeres protein 1a of Arabidopsis thaliana (Mouse-ear cress).